Consider the following 198-residue polypeptide: Dephospho-CoA kinase (198 aa).

The DPCK domain maps to 4 to 198 (RIGLTGGIAS…CGLRADGTTW (195 aa)). 12-17 (ASGKSS) serves as a coordination point for ATP.

It belongs to the CoaE family.

The protein resides in the cytoplasm. It catalyses the reaction 3'-dephospho-CoA + ATP = ADP + CoA + H(+). It participates in cofactor biosynthesis; coenzyme A biosynthesis; CoA from (R)-pantothenate: step 5/5. Catalyzes the phosphorylation of the 3'-hydroxyl group of dephosphocoenzyme A to form coenzyme A. This Parasynechococcus marenigrum (strain WH8102) protein is Dephospho-CoA kinase.